A 609-amino-acid polypeptide reads, in one-letter code: Protein KINESIN LIGHT CHAIN-RELATED 1 (609 aa).

The disordered stretch occupies residues 1–77; sequence MPAMPGLVSV…TAAVIDVDDP (77 aa). Residues 38-55 show a composition bias toward low complexity; sequence KKTPSSTPSRSKPSPNRS. 10 TPR repeats span residues 140-173, 183-216, 225-258, 267-301, 307-340, 349-382, 392-425, 433-466, 474-507, and 516-549; these read AMSL…PDPT, FSGH…QIQT, GETC…HRAH, AADR…IASG, ASID…FKAS, ASVF…YNKP, AGGL…LEDK, AGLE…LRAA, GVVL…LEQE, and LGVY…REEK. Residues 582-609 form a disordered region; that stretch reads LQNLIDPNARPPKKESSAKKWPSLGFKF.

This sequence belongs to the kinesin light chain family. As to quaternary structure, interacts with IQD1.

The protein resides in the cytoplasm. Its subcellular location is the cytoskeleton. The sequence is that of Protein KINESIN LIGHT CHAIN-RELATED 1 from Arabidopsis thaliana (Mouse-ear cress).